Consider the following 534-residue polypeptide: Capsid scaffolding protein (534 aa).

Residues His46, Ser114, and His134 each act as charge relay system in the active site. The interaction with pAP stretch occupies residues 253-272 (EDIISIPKSAFLSMLQSSID). The Nuclear localization signal motif lies at 336–342 (RTGKRKR). Disordered regions lie at residues 337 to 356 (TGKRKRGAEDDEGHLFPGEE) and 466 to 524 (GAPP…KIRK). A compositionally biased stretch (polar residues) spans 479–491 (QSIQQQAPETTHT). Residues 514-534 (SRSSPKSKIRKMFCEELLNKQ) are interaction with major capsid protein.

Belongs to the herpesviridae capsid scaffolding protein family. Homomultimer. Interacts with major capsid protein. As to quaternary structure, exists in a monomer-dimer equilibrium with the dimer being the active species. Post-translationally, capsid scaffolding protein is cleaved by assemblin after formation of the spherical procapsid. As a result, the capsid obtains its mature, icosahedral shape. Cleavages occur at two or more sites: release (R-site) and maturation (M-site).

Its subcellular location is the host cytoplasm. The protein resides in the host nucleus. The enzyme catalyses Cleaves -Ala-|-Ser- and -Ala-|-Ala- bonds in the scaffold protein.. In terms of biological role, acts as a scaffold protein by binding major capsid protein in the cytoplasm, inducing the nuclear localization of both proteins. Multimerizes in the nucleus such as major capsid protein forms the icosahedral T=16 capsid. Autocatalytic cleavage releases the assembly protein, and subsequently abolishes interaction with major capsid protein. Cleavages products are evicted from the capsid before or during DNA packaging. Protease that plays an essential role in virion assembly within the nucleus. Catalyzes the cleavage of the assembly protein after formation of the spherical procapsid. By that cleavage, the capsid matures and gains its icosahedral shape. The cleavage sites seem to include -Ala-Ser-, -Ala-Ala-, as well as Ala-Thr bonds. Assemblin and cleavages products are evicted from the capsid before or during DNA packaging. Its function is as follows. Plays a major role in capsid assembly. Acts as a scaffold protein by binding major capsid protein. Multimerizes in the nucleus such as major capsid protein forms the icosahedral T=16 capsid. Cleaved by assemblin after capsid completion. The cleavages products are evicted from the capsid before or during DNA packaging. The chain is Capsid scaffolding protein (ORF17) from Human herpesvirus 8 type P (isolate GK18) (HHV-8).